The sequence spans 254 residues: Uridylate kinase (254 aa).

Residue 9–12 participates in ATP binding; that stretch reads KLSG. Gly51 contributes to the UMP binding site. Residues Gly52 and Arg56 each contribute to the ATP site. Residues Asp72 and 133–140 each bind UMP; that span reads SGNPFFTT. 3 residues coordinate ATP: Thr160, Tyr166, and Asp169.

The protein belongs to the UMP kinase family. Homohexamer.

It localises to the cytoplasm. It catalyses the reaction UMP + ATP = UDP + ADP. It functions in the pathway pyrimidine metabolism; CTP biosynthesis via de novo pathway; UDP from UMP (UMPK route): step 1/1. With respect to regulation, inhibited by UTP. In terms of biological role, catalyzes the reversible phosphorylation of UMP to UDP. This is Uridylate kinase from Synechococcus sp. (strain JA-3-3Ab) (Cyanobacteria bacterium Yellowstone A-Prime).